The sequence spans 237 residues: MGTERAKERAARFAASLVEDGMIVGLGSGSTAELAVRALGERLHDGLRLIGVATSQRTAALARRVGIELRDPDSVDRIDLAIDGADEVEERSLGLLKGRGGALVREKLVARMARRLVIIIDDSKLVAALGARFPLPVEVVPFGWRWCARWLEDLGGRPTLRCRPTGHPFRSDNGNLILDVAFGAIADPAWLDRTIKMLPGVIDHGLFLDMADLVIVGSETGIRLLERSRTVSETSKS.

Substrate-binding positions include 28-31 (SGST), 83-86 (DGAD), and 97-100 (KGRG). The active-site Proton acceptor is Glu-106. Lys-124 contacts substrate.

It belongs to the ribose 5-phosphate isomerase family. In terms of assembly, homodimer.

It catalyses the reaction aldehydo-D-ribose 5-phosphate = D-ribulose 5-phosphate. Its pathway is carbohydrate degradation; pentose phosphate pathway; D-ribose 5-phosphate from D-ribulose 5-phosphate (non-oxidative stage): step 1/1. In terms of biological role, catalyzes the reversible conversion of ribose-5-phosphate to ribulose 5-phosphate. The protein is Ribose-5-phosphate isomerase A of Thermomicrobium roseum (strain ATCC 27502 / DSM 5159 / P-2).